A 25-amino-acid chain; its full sequence is Caerin-1.3 (25 aa).

Leu25 bears the Leucine amide mark.

In terms of tissue distribution, expressed by the skin parotoid and/or rostral glands.

Its subcellular location is the secreted. In terms of biological role, antibacterial peptide, that adopts an alpha helical conformation which can disrupt bacterial membranes. Each caerin displays a different antimicrobial specificity. This Ranoidea caerulea (Green tree frog) protein is Caerin-1.3.